The sequence spans 558 residues: Arginine--tRNA ligase (558 aa).

The 'HIGH' region signature appears at Ala134–Gln144.

It belongs to the class-I aminoacyl-tRNA synthetase family. In terms of assembly, monomer.

The protein localises to the cytoplasm. It catalyses the reaction tRNA(Arg) + L-arginine + ATP = L-arginyl-tRNA(Arg) + AMP + diphosphate. The chain is Arginine--tRNA ligase from Symbiobacterium thermophilum (strain DSM 24528 / JCM 14929 / IAM 14863 / T).